We begin with the raw amino-acid sequence, 78 residues long: MFKTINKSITSILLFMISCYQKWFSPFFGPRCRFIPSCSSYGYEAITRHGPWKGGWLTLRRLSRCHPLTPCGCDPVPD.

It belongs to the UPF0161 family.

It localises to the cell inner membrane. Functionally, could be involved in insertion of integral membrane proteins into the membrane. This is Putative membrane protein insertion efficiency factor from Prochlorococcus marinus subsp. pastoris (strain CCMP1986 / NIES-2087 / MED4).